Consider the following 464-residue polypeptide: Glutamate--tRNA ligase (464 aa).

The short motif at 10–20 (PSPTGYLHIGG) is the 'HIGH' region element. A compositionally biased stretch (basic and acidic residues) spans 113-130 (QEAKKEKPRYDGRWRPEA). The segment at 113–142 (QEAKKEKPRYDGRWRPEAGKALPVPPTDVP) is disordered. Residues 242–246 (KLSKR) carry the 'KMSKS' region motif. Lys245 provides a ligand contact to ATP.

This sequence belongs to the class-I aminoacyl-tRNA synthetase family. Glutamate--tRNA ligase type 1 subfamily. In terms of assembly, monomer.

The protein localises to the cytoplasm. It catalyses the reaction tRNA(Glu) + L-glutamate + ATP = L-glutamyl-tRNA(Glu) + AMP + diphosphate. Catalyzes the attachment of glutamate to tRNA(Glu) in a two-step reaction: glutamate is first activated by ATP to form Glu-AMP and then transferred to the acceptor end of tRNA(Glu). The protein is Glutamate--tRNA ligase of Dechloromonas aromatica (strain RCB).